A 108-amino-acid polypeptide reads, in one-letter code: UPF0060 membrane protein YnfA (108 aa).

At 1 to 5 (MLKTT) the chain is on the periplasmic side. A helical transmembrane segment spans residues 6–26 (LLFFVTALCEIIGCFLPWLWI). Over 27-30 (KRGA) the chain is Cytoplasmic. The chain crosses the membrane as a helical span at residues 31 to 51 (SVWWLLPAAASLALFVWLLTL). The Periplasmic segment spans residues 52–60 (HPAASGRVY). Residues 61 to 81 (AAYGGVYVCTALLWLRVVDGV) form a helical membrane-spanning segment. Residues 82 to 84 (RLT) are Cytoplasmic-facing. The helical transmembrane segment at 85–105 (VYDWSGALIALCGMLIIVVGW) threads the bilayer. Residues 106–108 (GRT) lie on the Periplasmic side of the membrane.

Belongs to the UPF0060 family.

The protein resides in the cell inner membrane. This Salmonella typhi protein is UPF0060 membrane protein YnfA.